The following is a 145-amino-acid chain: UPF0179 protein Msm_0285 (145 aa).

This sequence belongs to the UPF0179 family.

The protein is UPF0179 protein Msm_0285 of Methanobrevibacter smithii (strain ATCC 35061 / DSM 861 / OCM 144 / PS).